Consider the following 621-residue polypeptide: Ubiquitin-like-specific protease 1 (621 aa).

Position 2 is an N-acetylserine (Ser-2). Residues Ser-21 and Ser-25 each carry the phosphoserine modification. Disordered stretches follow at residues 116–150 (FDGSEVEASGNSDVESRSSGSRSSDVPYGLRENYS) and 169–196 (RRRIESEGVGTPSTSPISSLASQKSNCD). A compositionally biased stretch (low complexity) spans 124–141 (SGNSDVESRSSGSRSSDV). Thr-179 carries the post-translational modification Phosphothreonine. A compositionally biased stretch (polar residues) spans 179-196 (TPSTSPISSLASQKSNCD). Ser-264 is modified (phosphoserine). The interval 432-621 (NIEITVRDFK…AHLILTDALK (190 aa)) is protease. Catalysis depends on residues His-514, Asp-531, and Cys-580.

It belongs to the peptidase C48 family.

It carries out the reaction Hydrolysis of the alpha-linked peptide bond in the sequence Gly-Gly-|-Ala-Thr-Tyr at the C-terminal end of the small ubiquitin-like modifier (SUMO) propeptide, Smt3, leading to the mature form of the protein. A second reaction involves the cleavage of an epsilon-linked peptide bond between the C-terminal glycine of the mature SUMO and the lysine epsilon-amino group of the target protein.. Protease that catalyzes two essential functions in the SUMO pathway: processing of full-length SMT3 to its mature form and deconjugation of SMT3 from targeted proteins. Has an essential role in the G2/M phase of the cell cycle. The chain is Ubiquitin-like-specific protease 1 (ULP1) from Saccharomyces cerevisiae (strain ATCC 204508 / S288c) (Baker's yeast).